The sequence spans 409 residues: Outer membrane protein YopM (409 aa).

15 LRR repeats span residues 72 to 91 (QAHE…ELPP), 92 to 113 (HLES…PQSL), 114 to 131 (KSLL…DLPP), 132 to 153 (LLEY…QNSS), 154 to 173 (FLKI…DLPP), 174 to 195 (SLEF…QNLP), 196 to 215 (FLTA…DLPL), 216 to 237 (SLES…QNLP), 238 to 257 (FLTT…DLPP), 258 to 279 (SLEA…PQSL), 280 to 297 (TFLD…ELPP), 298 to 317 (NLYY…DLPP), 318 to 339 (SLEE…PPRL), 340 to 357 (ERLI…ELPQ), and 358 to 379 (NLKQ…PESV). Asn-246 and Asp-266 together coordinate Ca(2+). Positions 307, 308, and 326 each coordinate Ca(2+).

This sequence belongs to the LRR-containing bacterial E3 ligase family. As to quaternary structure, homotetramer forming a hollow cylinder with an inner diameter of approximately 35 angstroms.

It localises to the cell outer membrane. The protein localises to the secreted. Its function is as follows. Effector proteins function to alter host cell physiology and promote bacterial survival in host tissues. The sequence is that of Outer membrane protein YopM (yopM) from Yersinia pestis.